We begin with the raw amino-acid sequence, 557 residues long: 6-methylpretetramide 4-monooxygenase (557 aa).

FAD is bound by residues 9–38 and 278–288; these read QVLI…VIDR and MRSGRCFVAGD. Positions 530-557 are disordered; the sequence is LPEDTAPGAGDSAGRPAPDGTRRGVTTE.

It belongs to the PheA/TfdB FAD monooxygenase family. FAD is required as a cofactor.

The enzyme catalyses 6-methylpretetramide + NADPH + O2 + 2 H(+) = 4-hydroxy-6-methylpretetramide + NADP(+) + H2O. It carries out the reaction 4-hydroxy-6-methylpretetramide + NADPH + O2 = 4-dedimethylamino-4-oxo-anhydrotetracycline + NADP(+) + H2O. It participates in antibiotic biosynthesis; oxytetracycline biosynthesis. In terms of biological role, involved in the biosynthesis of the tetracycline antibiotic, oxytetracycline. Catalyzes the double hydroxylation of 6-methylpretetramide to yield 4-keto-anhydrotetracycline, via the insertion of oxygen atoms at the C-12a and C-4 positions of 6-pretetramid. The polypeptide is 6-methylpretetramide 4-monooxygenase (Streptomyces rimosus).